The sequence spans 328 residues: GMP reductase (328 aa).

Cys177 (thioimidate intermediate) is an active-site residue. Residue 206 to 229 (IVADGGIRYNGDIAKSIRFGASMV) coordinates NADP(+).

Belongs to the IMPDH/GMPR family. GuaC type 2 subfamily.

It carries out the reaction IMP + NH4(+) + NADP(+) = GMP + NADPH + 2 H(+). Its function is as follows. Catalyzes the irreversible NADPH-dependent deamination of GMP to IMP. It functions in the conversion of nucleobase, nucleoside and nucleotide derivatives of G to A nucleotides, and in maintaining the intracellular balance of A and G nucleotides. This Levilactobacillus brevis (strain ATCC 367 / BCRC 12310 / CIP 105137 / JCM 1170 / LMG 11437 / NCIMB 947 / NCTC 947) (Lactobacillus brevis) protein is GMP reductase.